Consider the following 688-residue polypeptide: Translation initiation factor IF-2 (688 aa).

Residues 50-62 (LLSGKEKSEKTKE) show a composition bias toward basic and acidic residues. Positions 50 to 95 (LLSGKEKSEKTKEEDDEIETTAKNPIKESINNKKSNKRDDKNEKVN) are disordered. The span at 72 to 82 (KNPIKESINNK) shows a compositional bias: low complexity. Residues 86 to 95 (KRDDKNEKVN) are compositionally biased toward basic and acidic residues. The tr-type G domain occupies 187 to 354 (KRSPIITVMG…MILLSSEILE (168 aa)). The interval 196 to 203 (GHVDHGKT) is G1. A GTP-binding site is contributed by 196-203 (GHVDHGKT). Positions 221 to 225 (GITQH) are G2. The tract at residues 242-245 (DTPG) is G3. Residues 242–246 (DTPGH) and 296–299 (NKID) each bind GTP. Positions 296–299 (NKID) are G4. Residues 332–334 (SAH) are G5.

It belongs to the TRAFAC class translation factor GTPase superfamily. Classic translation factor GTPase family. IF-2 subfamily.

It localises to the cytoplasm. In terms of biological role, one of the essential components for the initiation of protein synthesis. Protects formylmethionyl-tRNA from spontaneous hydrolysis and promotes its binding to the 30S ribosomal subunits. Also involved in the hydrolysis of GTP during the formation of the 70S ribosomal complex. In Clostridium botulinum (strain Langeland / NCTC 10281 / Type F), this protein is Translation initiation factor IF-2.